A 152-amino-acid chain; its full sequence is Nucleoside diphosphate kinase (152 aa).

ATP contacts are provided by Lys11, Phe59, Arg87, Thr93, Arg104, and Asn114. The active-site Pros-phosphohistidine intermediate is the His117.

Belongs to the NDK family. As to quaternary structure, homotetramer. It depends on Mg(2+) as a cofactor.

The protein localises to the cytoplasm. It catalyses the reaction a 2'-deoxyribonucleoside 5'-diphosphate + ATP = a 2'-deoxyribonucleoside 5'-triphosphate + ADP. The catalysed reaction is a ribonucleoside 5'-diphosphate + ATP = a ribonucleoside 5'-triphosphate + ADP. Major role in the synthesis of nucleoside triphosphates other than ATP. The ATP gamma phosphate is transferred to the NDP beta phosphate via a ping-pong mechanism, using a phosphorylated active-site intermediate. This Prochlorococcus marinus (strain MIT 9515) protein is Nucleoside diphosphate kinase.